The chain runs to 523 residues: Pentatricopeptide repeat-containing protein At1g64580 (523 aa).

PPR repeat units follow at residues 43–77 (HHHHYRERLRNELHCIKFDDAFSLFCEMLQSRPIP), 78–112 (SIVDFTRVLTVIAKMNKFDIVIYLYHKMENLGISH), 113–147 (DLYSFTILIHCFCRCSRLSLALALLGKMMKLGFRP), 148–182 (SIVTLGSLLNGFCQGNRFQEAVSLVDSMDGFGFVP), 183–217 (NVVIYNTVINGLCKNRDLNNALEVFYCMEKKGIRA), 218–252 (DAVTYNTLISGLSNSGRWTDAARLLRDMVKRKIDP), 253–287 (NVIFFTALIDTFVKEGNLLEARNLYKEMIRRSVVP), 288–322 (NVFTYNSLINGFCIHGCLGDAKYMFDLMVSKGCFP), 323–357 (DVVTYNTLITGFCKSKRVEDGMKLFCEMTYQGLVG), 358–392 (DAFTYNTLIHGYCQAGKLNVAQKVFNRMVDCGVSP), 393–427 (DIVTYNILLDCLCNNGKIEKALVMVEDLQKSEMDV), 428–462 (DIITYNIIIQGLCRTDKLKEAWCLFRSLTRKGVKP), and 463–497 (DAIAYITMISGLCRKGLQREADKLCRRMKEDGFMP).

Belongs to the PPR family. P subfamily.

The chain is Pentatricopeptide repeat-containing protein At1g64580 from Arabidopsis thaliana (Mouse-ear cress).